Reading from the N-terminus, the 515-residue chain is Maturase K (515 aa).

This sequence belongs to the intron maturase 2 family. MatK subfamily.

It localises to the plastid. Its subcellular location is the chloroplast. Functionally, usually encoded in the trnK tRNA gene intron. Probably assists in splicing its own and other chloroplast group II introns. The protein is Maturase K of Sorghum bicolor (Sorghum).